We begin with the raw amino-acid sequence, 120 residues long: Large ribosomal subunit protein uL18 (120 aa).

This sequence belongs to the universal ribosomal protein uL18 family. Part of the 50S ribosomal subunit; part of the 5S rRNA/L5/L18/L25 subcomplex. Contacts the 5S and 23S rRNAs.

In terms of biological role, this is one of the proteins that bind and probably mediate the attachment of the 5S RNA into the large ribosomal subunit, where it forms part of the central protuberance. The chain is Large ribosomal subunit protein uL18 from Trichodesmium erythraeum (strain IMS101).